The sequence spans 312 residues: Methionyl-tRNA formyltransferase (312 aa).

111 to 114 is a binding site for (6S)-5,6,7,8-tetrahydrofolate; the sequence is SLLP.

It belongs to the Fmt family.

The catalysed reaction is L-methionyl-tRNA(fMet) + (6R)-10-formyltetrahydrofolate = N-formyl-L-methionyl-tRNA(fMet) + (6S)-5,6,7,8-tetrahydrofolate + H(+). Functionally, attaches a formyl group to the free amino group of methionyl-tRNA(fMet). The formyl group appears to play a dual role in the initiator identity of N-formylmethionyl-tRNA by promoting its recognition by IF2 and preventing the misappropriation of this tRNA by the elongation apparatus. The polypeptide is Methionyl-tRNA formyltransferase (Rhodopseudomonas palustris (strain HaA2)).